The following is a 282-amino-acid chain: Probable iron transport system membrane protein HI_0360 (282 aa).

Helical transmembrane passes span 17-37 (AMIL…YLML), 63-83 (LPYA…ILWI), 93-113 (AVIG…VSLN), 140-160 (IIIG…LLIF), 164-184 (TQAI…FTLL), 186-206 (ACVV…MVVT), 223-243 (IIAI…SYYL), and 245-265 (GATG…AFLF).

Belongs to the ABC-3 integral membrane protein family.

It localises to the cell inner membrane. In terms of biological role, part of an ATP-driven transport system HI_0359/HI_0360/HI_0361/HI_0362 for iron. This is Probable iron transport system membrane protein HI_0360 from Haemophilus influenzae (strain ATCC 51907 / DSM 11121 / KW20 / Rd).